The sequence spans 529 residues: MYQKEIEQRRTFGIISHPDAGKTTLTEKLLLFGGAIQLAGTVKARKATRHATSDWMAIEKERGISVTTSVMKFHYRDFEINLLDTPGHQDFSEDTYRVLTAVDSAVMVIDGAKGVEPQTEKLMEICLLRNTPVITFINKLDREVLSPLELLADIEKKLQIECVPMSWPIGMGKSFRGVYNLYRRELQLFTPGASTRGGEVFVIRDLDDPELDRRLGSQADELREDIALMEGAANPFVYEHFLKANQTPVFFGSAINNFGVRELLDAVVELAPSPRPRLATTREVLPSEEQFSGFAFKIQANMDSAHRDRIAFVRICSGKFTRGMKVRHNRIGKDVTLANATIFMAQDRASVEEAYPGDIIGIHNHGTIRIGDTFTEGEELRFTGIPNFAPEHFCRVRLKNPLKTKQLQKGLNQLSEEGIVQVFRPLTSNDYILGVVGVLQFDVTMVRLLNEYGVEADYESVDYAAARWVTCPEREKLENFEKQHRSNLALDSEGNLIYLALSQWRLSNTMEEWPDITMHKTMEHSQRLN.

Residues 7-275 (EQRRTFGIIS…AVVELAPSPR (269 aa)) enclose the tr-type G domain. Residues 16 to 23 (SHPDAGKT), 84 to 88 (DTPGH), and 138 to 141 (NKLD) each bind GTP.

This sequence belongs to the TRAFAC class translation factor GTPase superfamily. Classic translation factor GTPase family. PrfC subfamily.

The protein localises to the cytoplasm. Functionally, increases the formation of ribosomal termination complexes and stimulates activities of RF-1 and RF-2. It binds guanine nucleotides and has strong preference for UGA stop codons. It may interact directly with the ribosome. The stimulation of RF-1 and RF-2 is significantly reduced by GTP and GDP, but not by GMP. This is Peptide chain release factor 3 from Syntrophus aciditrophicus (strain SB).